We begin with the raw amino-acid sequence, 551 residues long: Solute carrier family 22 member 13 (551 aa).

Residues 1–20 lie on the Cytoplasmic side of the membrane; the sequence is MAQFVQVLAEIGDFGRFQIQ. The helical transmembrane segment at 21–41 threads the bilayer; sequence LLILLCVLNFLSPFYFFAHVF. At 42–138 the chain is on the extracellular side; sequence MVLDEPHHCA…LVCDRKHLKD (97 aa). 4 N-linked (GlcNAc...) asparagine glycosylation sites follow: Asn-57, Asn-61, Asn-92, and Asn-104. A helical membrane pass occupies residues 139–159; sequence TTQSVFMAGLLVGTLMFGPLC. Residues 160–167 lie on the Cytoplasmic side of the membrane; sequence DRIGRKAT. A helical membrane pass occupies residues 168–188; sequence ILAQLLLFTLIGLATAFVPSF. Over 189 to 195 the chain is Extracellular; the sequence is ELYMALR. A helical transmembrane segment spans residues 196–216; sequence FAVATAVAGLSFSNVTLLTEW. The Cytoplasmic portion of the chain corresponds to 217–224; that stretch reads VGPSWRTQ. Residues 225 to 245 traverse the membrane as a helical segment; that stretch reads AVVLAQCNFSLGQMVLAGLAY. Topologically, residues 246–251 are extracellular; it reads GFRNWR. Residues 252-272 form a helical membrane-spanning segment; that stretch reads LLQITGTAPGLLLFFYFWALP. At 273–332 the chain is on the cytoplasmic side; that stretch reads ESARWLLTRGRMDEAIQLIQKAASVNRRKLSPELMNQLVPEKTGPSGNALDLFRHPQLRK. A helical transmembrane segment spans residues 333–353; that stretch reads VTLIIFCVWFVDSLGYYGLSL. Gln-354 is a topological domain (extracellular). The helical transmembrane segment at 355 to 375 threads the bilayer; it reads VGDFGLDVYLTQLIFGAVEVP. Topologically, residues 376 to 397 are cytoplasmic; sequence ARCSSIFMMQRFGRKWSQLGTL. The chain crosses the membrane as a helical span at residues 398-418; the sequence is VLGGLMCIIIIFIPADLPVVV. The Extracellular portion of the chain corresponds to 419 to 427; that stretch reads TMLAVVGKM. Residues 428–448 traverse the membrane as a helical segment; sequence ATAAAFTISYVYSAELFPTIL. Topologically, residues 449-452 are cytoplasmic; sequence RQTG. Residues 453–473 traverse the membrane as a helical segment; the sequence is MGLVGIFSRIGGILTPLVILL. The Extracellular portion of the chain corresponds to 474 to 478; the sequence is GEYHA. Residues 479–499 form a helical membrane-spanning segment; sequence ALPMLIYGSLPIVAGLLCTLL. At 500-551 the chain is on the cytoplasmic side; the sequence is PETHGQGLKDTLQDLELGPHPRSPKSVPSEKETEAKGRTSSPGVAFVSSTYF. The disordered stretch occupies residues 511–551; sequence LQDLELGPHPRSPKSVPSEKETEAKGRTSSPGVAFVSSTYF. Basic and acidic residues predominate over residues 527–536; the sequence is PSEKETEAKG. The span at 537–551 shows a compositional bias: polar residues; the sequence is RTSSPGVAFVSSTYF.

This sequence belongs to the major facilitator (TC 2.A.1) superfamily. Organic cation transporter (TC 2.A.1.19) family. Post-translationally, glycosylated. As to expression, ubiquitous. Highly expressed in kidneys and to a weaker extent in brain, heart, and intestine. In kidneys, expressed in proximal convoluted tubule. In kidneys, also expressed in cortical collecting duct, whereas glomerulus and thick ascending limb exhibit no expression.

The protein resides in the apical cell membrane. It carries out the reaction urate(out) + (S)-lactate(in) = urate(in) + (S)-lactate(out). The enzyme catalyses urate(out) + succinate(in) = urate(in) + succinate(out). The catalysed reaction is urate(out) + glutathione(in) = urate(in) + glutathione(out). It catalyses the reaction nicotinate(in) + urate(out) = nicotinate(out) + urate(in). It carries out the reaction orotate(out) + a carboxylate(in) = orotate(in) + a carboxylate(out). Functionally, anion antiporter that mediates the transport of urate, orotate and nicotinate in exchange for organic or inorganic anions. Translocates urate and orotate across the apical membrane of proximal tubule epithelial cells and involved in urate renal reabsorption. Possibly involved in orotate renal reabsorption and nicotinate intestinal reabsorption. Mediates urate uptake by an exchange with organic anions such as (S)-lactate, succinate, glutathione and nicotinate. Urate and orotate transports are Cl(-)-dependent. Shows similar transport characteristics as the urate/orotate renal antiporter SLC22A12/URAT1 and may act as a compensator of SLC22A12/URAT1 in certain conditions. The protein is Solute carrier family 22 member 13 of Homo sapiens (Human).